The primary structure comprises 194 residues: Thymidine kinase (194 aa).

ATP-binding positions include 15 to 22 and 89 to 92; these read GPMFSGKS and DEAH. Glu-90 acts as the Proton acceptor in catalysis. The Zn(2+) site is built by Cys-146, Cys-149, Cys-178, and Cys-181.

It belongs to the thymidine kinase family. In terms of assembly, homotetramer.

Its subcellular location is the cytoplasm. The catalysed reaction is thymidine + ATP = dTMP + ADP + H(+). The sequence is that of Thymidine kinase from Metamycoplasma arthritidis (strain 158L3-1) (Mycoplasma arthritidis).